The primary structure comprises 286 residues: Bifunctional protein FolD (286 aa).

Residues 166-168 and Ile-232 contribute to the NADP(+) site; that span reads GAS.

It belongs to the tetrahydrofolate dehydrogenase/cyclohydrolase family. Homodimer.

It catalyses the reaction (6R)-5,10-methylene-5,6,7,8-tetrahydrofolate + NADP(+) = (6R)-5,10-methenyltetrahydrofolate + NADPH. It carries out the reaction (6R)-5,10-methenyltetrahydrofolate + H2O = (6R)-10-formyltetrahydrofolate + H(+). It functions in the pathway one-carbon metabolism; tetrahydrofolate interconversion. Its function is as follows. Catalyzes the oxidation of 5,10-methylenetetrahydrofolate to 5,10-methenyltetrahydrofolate and then the hydrolysis of 5,10-methenyltetrahydrofolate to 10-formyltetrahydrofolate. This is Bifunctional protein FolD from Blochmanniella pennsylvanica (strain BPEN).